The chain runs to 280 residues: Urease accessory protein UreD 1 (280 aa).

The protein belongs to the UreD family. UreD, UreF and UreG form a complex that acts as a GTP-hydrolysis-dependent molecular chaperone, activating the urease apoprotein by helping to assemble the nickel containing metallocenter of UreC. The UreE protein probably delivers the nickel.

The protein resides in the cytoplasm. Its function is as follows. Required for maturation of urease via the functional incorporation of the urease nickel metallocenter. The protein is Urease accessory protein UreD 1 of Bradyrhizobium sp. (strain BTAi1 / ATCC BAA-1182).